Here is a 253-residue protein sequence, read N- to C-terminus: Probable U3 small nucleolar RNA-associated protein 11 (253 aa).

Residues 1–21 (MAAAFRKAVKSRQREYRERSQ) form a disordered region. Residues lysine 74, lysine 83, and lysine 86 each participate in a glycyl lysine isopeptide (Lys-Gly) (interchain with G-Cter in SUMO2) cross-link. The residue at position 90 (threonine 90) is a Phosphothreonine. Residues lysine 103, lysine 120, lysine 143, lysine 144, lysine 180, lysine 211, lysine 218, lysine 235, and lysine 236 each participate in a glycyl lysine isopeptide (Lys-Gly) (interchain with G-Cter in SUMO2) cross-link. Serine 241 bears the Phosphoserine mark. Lysine 246 participates in a covalent cross-link: Glycyl lysine isopeptide (Lys-Gly) (interchain with G-Cter in SUMO2).

It belongs to the UTP11 family. Part of the small subunit (SSU) processome, composed of more than 70 proteins and the RNA chaperone small nucleolar RNA (snoRNA) U3.

The protein resides in the nucleus. The protein localises to the nucleolus. Part of the small subunit (SSU) processome, first precursor of the small eukaryotic ribosomal subunit. During the assembly of the SSU processome in the nucleolus, many ribosome biogenesis factors, an RNA chaperone and ribosomal proteins associate with the nascent pre-rRNA and work in concert to generate RNA folding, modifications, rearrangements and cleavage as well as targeted degradation of pre-ribosomal RNA by the RNA exosome. Involved in nucleolar processing of pre-18S ribosomal RNA. This chain is Probable U3 small nucleolar RNA-associated protein 11, found in Rattus norvegicus (Rat).